The following is an 88-amino-acid chain: Putative membrane protein insertion efficiency factor (88 aa).

Residues 68–88 are disordered; it reads VPPPNSDTRARGEADARSHRL. Positions 75–88 are enriched in basic and acidic residues; the sequence is TRARGEADARSHRL.

This sequence belongs to the UPF0161 family.

It localises to the cell inner membrane. In terms of biological role, could be involved in insertion of integral membrane proteins into the membrane. The protein is Putative membrane protein insertion efficiency factor of Burkholderia ambifaria (strain MC40-6).